A 20-amino-acid chain; its full sequence is Phospholipase A2 homolog P-elapitoxin-Aa1a gamma chain (20 aa).

This sequence belongs to the phospholipase A2 family. Group I subfamily. As to quaternary structure, heterotrimer of alpha, beta and gamma chains, each related to PLA2. Post-translationally, glycosylated. In terms of tissue distribution, expressed by the venom gland.

The protein resides in the secreted. Functionally, heterotrimer: Snake venom phospholipase A2 (PLA2) that has presynaptic neurotoxicity. Inhibits nerve-evoked twitch contractions but not responses to cholinergic agonists acetylcholine and carbachol and to depolarizing agonist KCl. Causes a fade in tetanic contractions. Displays a triphasic mode of action with depression, enhancement and blockade of neurotransmission. Does not display myotoxic activity such as changes in baseline muscle tension or inhibition of directly stimulated muscle twitches. All subunits are necessary for maximum toxicity. In terms of biological role, monomer: the gamma chain has no significant enzymatic activity and is not toxic by itself. In Acanthophis antarcticus (Common death adder), this protein is Phospholipase A2 homolog P-elapitoxin-Aa1a gamma chain.